A 396-amino-acid chain; its full sequence is 1-deoxy-D-xylulose 5-phosphate reductoisomerase (396 aa).

Residues Thr-13, Gly-14, Ser-15, Ile-16, and Asn-127 each coordinate NADPH. Lys-128 provides a ligand contact to 1-deoxy-D-xylulose 5-phosphate. Residue Glu-129 coordinates NADPH. Asp-153 serves as a coordination point for Mn(2+). 1-deoxy-D-xylulose 5-phosphate-binding residues include Ser-154, Glu-155, Ser-184, and His-207. Glu-155 contributes to the Mn(2+) binding site. Gly-213 provides a ligand contact to NADPH. Residues Ser-220, Asn-225, Lys-226, and Glu-229 each contribute to the 1-deoxy-D-xylulose 5-phosphate site. Glu-229 contributes to the Mn(2+) binding site.

The protein belongs to the DXR family. It depends on Mg(2+) as a cofactor. Mn(2+) serves as cofactor.

The enzyme catalyses 2-C-methyl-D-erythritol 4-phosphate + NADP(+) = 1-deoxy-D-xylulose 5-phosphate + NADPH + H(+). The protein operates within isoprenoid biosynthesis; isopentenyl diphosphate biosynthesis via DXP pathway; isopentenyl diphosphate from 1-deoxy-D-xylulose 5-phosphate: step 1/6. Its function is as follows. Catalyzes the NADPH-dependent rearrangement and reduction of 1-deoxy-D-xylulose-5-phosphate (DXP) to 2-C-methyl-D-erythritol 4-phosphate (MEP). This chain is 1-deoxy-D-xylulose 5-phosphate reductoisomerase, found in Pseudomonas syringae pv. tomato (strain ATCC BAA-871 / DC3000).